The sequence spans 400 residues: Argininosuccinate synthase (400 aa).

8–16 (AYSGGLDTS) is an ATP binding site. L-citrulline-binding residues include Tyr87 and Ser92. ATP is bound at residue Gly117. The L-aspartate site is built by Thr119, Asn123, and Asp124. Position 123 (Asn123) interacts with L-citrulline. Positions 127, 175, 259, and 271 each coordinate L-citrulline.

The protein belongs to the argininosuccinate synthase family. Type 1 subfamily. Homotetramer.

The protein resides in the cytoplasm. It catalyses the reaction L-citrulline + L-aspartate + ATP = 2-(N(omega)-L-arginino)succinate + AMP + diphosphate + H(+). It functions in the pathway amino-acid biosynthesis; L-arginine biosynthesis; L-arginine from L-ornithine and carbamoyl phosphate: step 2/3. The protein is Argininosuccinate synthase of Frankia casuarinae (strain DSM 45818 / CECT 9043 / HFP020203 / CcI3).